A 182-amino-acid chain; its full sequence is tRNA-splicing endonuclease (182 aa).

Catalysis depends on residues Y119, H127, and K158.

It belongs to the tRNA-intron endonuclease family. Archaeal short subfamily. Homotetramer; although the tetramer contains four active sites, only two participate in the cleavage. Therefore, it should be considered as a dimer of dimers.

The enzyme catalyses pretRNA = a 3'-half-tRNA molecule with a 5'-OH end + a 5'-half-tRNA molecule with a 2',3'-cyclic phosphate end + an intron with a 2',3'-cyclic phosphate and a 5'-hydroxyl terminus.. Endonuclease that removes tRNA introns. Cleaves pre-tRNA at the 5'- and 3'-splice sites to release the intron. The products are an intron and two tRNA half-molecules bearing 2',3' cyclic phosphate and 5'-OH termini. Recognizes a pseudosymmetric substrate in which 2 bulged loops of 3 bases are separated by a stem of 4 bp. This Saccharolobus islandicus (strain M.16.27) (Sulfolobus islandicus) protein is tRNA-splicing endonuclease.